Consider the following 71-residue polypeptide: Small integral membrane protein 31 (71 aa).

The chain crosses the membrane as a helical span at residues 8 to 28 (LEVAFILLAFFIFSLFTLASI). Positions 48-57 (RKRKEFKGKK) are enriched in basic residues. The disordered stretch occupies residues 48 to 71 (RKRKEFKGKKNCSDEEHKIETMQP). A glycan (N-linked (GlcNAc...) asparagine) is linked at Asn-58. Residues 58-71 (NCSDEEHKIETMQP) show a composition bias toward basic and acidic residues.

It localises to the membrane. This is Small integral membrane protein 31 from Mus musculus (Mouse).